A 474-amino-acid chain; its full sequence is Glutathione synthetase (474 aa).

A2 is subject to N-acetylalanine. Position 125 (R125) interacts with substrate. E144 is an ATP binding site. E144 and N146 together coordinate Mg(2+). Substrate contacts are provided by residues 148-151, 214-216, Q220, and 267-270; these read ISAS, ERN, and RDGY. ATP contacts are provided by residues K305, 364–373, Y375, and 398–401; these read KPQREGGGNN and MEKI. E368 serves as a coordination point for Mg(2+). A Phosphoserine modification is found at S415. ATP is bound at residue E425. A substrate-binding site is contributed by R450. Residues K452 and D458 each coordinate ATP. 461 to 462 provides a ligand contact to substrate; it reads VA.

This sequence belongs to the eukaryotic GSH synthase family. In terms of assembly, homodimer. The cofactor is Mg(2+).

The catalysed reaction is gamma-L-glutamyl-L-cysteine + glycine + ATP = glutathione + ADP + phosphate + H(+). The enzyme catalyses gamma-L-glutamyl-(2S)-2-aminobutanoate + glycine + ATP = ophthalmate + ADP + phosphate + H(+). The protein operates within sulfur metabolism; glutathione biosynthesis; glutathione from L-cysteine and L-glutamate: step 2/2. Catalyzes the production of glutathione from gamma-glutamylcysteine and glycine in an ATP-dependent manner. Glutathione (gamma-glutamylcysteinylglycine, GSH) is the most abundant intracellular thiol in living aerobic cells and is required for numerous processes including the protection of cells against oxidative damage, amino acid transport, the detoxification of foreign compounds, the maintenance of protein sulfhydryl groups in a reduced state and acts as a cofactor for a number of enzymes. Participates in ophthalmate biosynthesis in hepatocytes. The chain is Glutathione synthetase from Homo sapiens (Human).